A 343-amino-acid chain; its full sequence is Transcription factor MYB11 (343 aa).

2 HTH myb-type domains span residues 9-61 and 62-116; these read KVGI…INYL and RSDI…SRKL. DNA-binding regions (H-T-H motif) lie at residues 37–61 and 89–112; these read WRSLPKNAGLKRCGKSCRLRWINYL and WSTIASNLPGRTDNEIKNYWNSHL. Residues 126–146 are disordered; that stretch reads ANTVENAPPPPKRRPGRTSRS.

Expressed in seedlings, roots, cotyledons, leaves and apical meristems.

It localises to the nucleus. Functionally, modulates overall growth by reducing the proliferation activity of meristematic cells and delaying development. Flavonol-specific transcription activator involved in the regulation of several genes of flavonoid biosynthesis. Activates the expression of CHS, CHI, F3H and FLS1. Confers tolerance to UV-B. The chain is Transcription factor MYB11 from Arabidopsis thaliana (Mouse-ear cress).